Here is a 209-residue protein sequence, read N- to C-terminus: Probable GTP-binding protein EngB (209 aa).

The region spanning 12–203 (INLEIIFAGR…RDRLHEMKRD (192 aa)) is the EngB-type G domain. GTP is bound by residues 20–27 (GRSNVGKS), 45–49 (GVTLR), 62–65 (DMPG), 142–145 (NKMD), and 179–181 (ISA). Mg(2+) contacts are provided by Ser27 and Thr47.

The protein belongs to the TRAFAC class TrmE-Era-EngA-EngB-Septin-like GTPase superfamily. EngB GTPase family. Mg(2+) is required as a cofactor.

Functionally, necessary for normal cell division and for the maintenance of normal septation. This Methanosarcina mazei (strain ATCC BAA-159 / DSM 3647 / Goe1 / Go1 / JCM 11833 / OCM 88) (Methanosarcina frisia) protein is Probable GTP-binding protein EngB.